Here is a 388-residue protein sequence, read N- to C-terminus: Pre-mRNA-splicing factor cwf2 (388 aa).

Residues 43–63 are disordered; it reads VKRKKQPARKQIETRPEYEME. The C3H1-type zinc-finger motif lies at 111–138; the sequence is NPGSFFCLYFARGMCSEGSKCEYLHRLP. One can recognise an RRM domain in the interval 174-248; sequence YTLYVGGITP…ECLNVRWATT (75 aa). The segment at 331 to 352 is disordered; it reads PNKSQSEEGSNDDHKSVTTTES.

Belongs to the RRM CWC2 family. As to quaternary structure, belongs to the 40S cdc5-associated complex (or cwf complex), a spliceosome sub-complex reminiscent of a late-stage spliceosome composed of the U2, U5 and U6 snRNAs and at least brr2, cdc5, cwf2/prp3, cwf3/syf1, cwf4/syf3, cwf5/ecm2, spp42/cwf6, cwf7/spf27, cwf8, cwf9, cwf10, cwf11, cwf12, prp45/cwf13, cwf14, cwf15, cwf16, cwf17, cwf18, cwf19, cwf20, cwf21, cwf22, cwf23, cwf24, cwf25, cwf26, cyp7/cwf27, cwf28, cwf29/ist3, lea1, msl1, prp5/cwf1, prp10, prp12/sap130, prp17, prp22, sap61, sap62, sap114, sap145, slu7, smb1, smd1, smd3, smf1, smg1 and syf2.

It is found in the nucleus. In terms of biological role, involved in the first step of pre-mRNA splicing. Required for cell growth and cell cycle control. Plays a role in the levels of the U1, U4, U5 and U6 snRNAs and the maintenance of the U4/U6 snRNA complex. May provide the link between the 'nineteen complex' NTC spliceosome protein complex and the spliceosome through the U6 snRNA. Associates predominantly with U6 snRNAs in assembled active spliceosomes. Binds directly to the internal stem-loop (ISL) domain of the U6 snRNA and to the pre-mRNA intron near the 5' splice site during the activation and catalytic phases of the spliceosome cycle. Involved in pre-mRNA splicing. This is Pre-mRNA-splicing factor cwf2 (cwf2) from Schizosaccharomyces pombe (strain 972 / ATCC 24843) (Fission yeast).